Here is a 151-residue protein sequence, read N- to C-terminus: Putative membrane protein ORF10 (151 aa).

A run of 2 helical transmembrane segments spans residues 7-23 and 107-123; these read LCLA…GVVV and GLVA…IIMY.

It is found in the membrane. The sequence is that of Putative membrane protein ORF10 (ORF10) from Ictalurid herpesvirus 1 (strain Auburn) (IcHV-1).